The primary structure comprises 427 residues: 3-phosphoshikimate 1-carboxyvinyltransferase (427 aa).

K27, S28, and R32 together coordinate 3-phosphoshikimate. K27 serves as a coordination point for phosphoenolpyruvate. Phosphoenolpyruvate contacts are provided by G95 and R123. Positions 166, 167, 168, 192, 305, and 332 each coordinate 3-phosphoshikimate. Phosphoenolpyruvate is bound at residue Q168. Catalysis depends on D305, which acts as the Proton acceptor. Phosphoenolpyruvate is bound by residues R336 and R377.

Belongs to the EPSP synthase family. In terms of assembly, monomer.

Its subcellular location is the cytoplasm. The enzyme catalyses 3-phosphoshikimate + phosphoenolpyruvate = 5-O-(1-carboxyvinyl)-3-phosphoshikimate + phosphate. The protein operates within metabolic intermediate biosynthesis; chorismate biosynthesis. Functionally, catalyzes the transfer of the enolpyruvyl moiety of phosphoenolpyruvate (PEP) to the 5-hydroxyl of shikimate-3-phosphate (S3P) to produce enolpyruvyl shikimate-3-phosphate and inorganic phosphate. The sequence is that of 3-phosphoshikimate 1-carboxyvinyltransferase from Aeropyrum pernix (strain ATCC 700893 / DSM 11879 / JCM 9820 / NBRC 100138 / K1).